The chain runs to 317 residues: Acetyl-coenzyme A carboxylase carboxyl transferase subunit alpha (317 aa).

The CoA carboxyltransferase C-terminal domain occupies 39-293 (KLEAKAQKAL…KEAVVEALGA (255 aa)).

This sequence belongs to the AccA family. In terms of assembly, acetyl-CoA carboxylase is a heterohexamer composed of biotin carboxyl carrier protein (AccB), biotin carboxylase (AccC) and two subunits each of ACCase subunit alpha (AccA) and ACCase subunit beta (AccD).

The protein resides in the cytoplasm. The enzyme catalyses N(6)-carboxybiotinyl-L-lysyl-[protein] + acetyl-CoA = N(6)-biotinyl-L-lysyl-[protein] + malonyl-CoA. It participates in lipid metabolism; malonyl-CoA biosynthesis; malonyl-CoA from acetyl-CoA: step 1/1. In terms of biological role, component of the acetyl coenzyme A carboxylase (ACC) complex. First, biotin carboxylase catalyzes the carboxylation of biotin on its carrier protein (BCCP) and then the CO(2) group is transferred by the carboxyltransferase to acetyl-CoA to form malonyl-CoA. This Beijerinckia indica subsp. indica (strain ATCC 9039 / DSM 1715 / NCIMB 8712) protein is Acetyl-coenzyme A carboxylase carboxyl transferase subunit alpha.